The primary structure comprises 401 residues: Dual-specificity RNA methyltransferase RlmN (401 aa).

Residue Glu-114 is the Proton acceptor of the active site. The region spanning Asp-120–Asp-365 is the Radical SAM core domain. Residues Cys-127 and Cys-370 are joined by a disulfide bond. Positions 134, 138, and 141 each coordinate [4Fe-4S] cluster. Residues Gly-187–Glu-188, Ser-219, Ser-241–His-243, and Asn-327 each bind S-adenosyl-L-methionine. The active-site S-methylcysteine intermediate is Cys-370.

It belongs to the radical SAM superfamily. RlmN family. [4Fe-4S] cluster serves as cofactor.

It localises to the cytoplasm. It catalyses the reaction adenosine(2503) in 23S rRNA + 2 reduced [2Fe-2S]-[ferredoxin] + 2 S-adenosyl-L-methionine = 2-methyladenosine(2503) in 23S rRNA + 5'-deoxyadenosine + L-methionine + 2 oxidized [2Fe-2S]-[ferredoxin] + S-adenosyl-L-homocysteine. It carries out the reaction adenosine(37) in tRNA + 2 reduced [2Fe-2S]-[ferredoxin] + 2 S-adenosyl-L-methionine = 2-methyladenosine(37) in tRNA + 5'-deoxyadenosine + L-methionine + 2 oxidized [2Fe-2S]-[ferredoxin] + S-adenosyl-L-homocysteine. Functionally, specifically methylates position 2 of adenine 2503 in 23S rRNA and position 2 of adenine 37 in tRNAs. m2A2503 modification seems to play a crucial role in the proofreading step occurring at the peptidyl transferase center and thus would serve to optimize ribosomal fidelity. In Stenotrophomonas maltophilia (strain R551-3), this protein is Dual-specificity RNA methyltransferase RlmN.